The following is a 393-amino-acid chain: GDNF family receptor alpha-like (393 aa).

The N-terminal stretch at 1 to 19 (MLVFIFLAVTLSSENESSS) is a signal peptide. At 20–349 (QTNDCAHLIQ…LTGFNSFFNG (330 aa)) the chain is on the extracellular side. Residues asparagine 59, asparagine 65, asparagine 101, and asparagine 115 are each glycosylated (N-linked (GlcNAc...) asparagine). 11 disulfide bridges follow: cysteine 131-cysteine 189, cysteine 138-cysteine 144, cysteine 155-cysteine 167, cysteine 162-cysteine 210, cysteine 191-cysteine 198, cysteine 220-cysteine 291, cysteine 227-cysteine 233, cysteine 244-cysteine 275, cysteine 252-cysteine 258, cysteine 269-cysteine 316, and cysteine 293-cysteine 304. Positions 149-228 (ALYLKACSAN…TCLSVIHTCR (80 aa)) are required for interaction with GDF15. The helical transmembrane segment at 350 to 370 (ELLYVVVCMAVTCGILFLVML) threads the bilayer. Topologically, residues 371-393 (KLRIQSEKRDPSSIEIAGGVIIQ) are cytoplasmic.

Belongs to the GDNFR family. Interacts (via the extracellular domain) with GDF15 and RET; receptor of GDF15, mediates cellular signaling through interaction with RET after GDF15-binding. Interaction with RET requires previous GDF15-binding. Post-translationally, cleaved and inactivated by MMP14, inhibiting the GDF15-GFRAL aversive response. In terms of tissue distribution, expressed in the brainstem, restricted to cells in the area postrema and the immediately adjacent region of the nucleus tractus solitarius.

It localises to the cell membrane. Specifically inhibited by 3P10 monoclonal antibody. Strongly activated by LY3463251, a long-acting and stable agonist composed of GDF15 conjugated monomeric human IgG4 Fc. Functionally, brainstem-restricted receptor for GDF15 hormone, which triggers an aversive response, characterized by nausea, vomiting, and/or loss of appetite in response to various stresses. The aversive response is both required to reduce continuing exposure to those stresses at the time of exposure and to promote avoidance behavior in the future. The GDF15-GFRAL aversive response is triggered by stresses, such as anticancer drugs (camptothecin or cisplatin), cancers or drugs such as metformin. Upon interaction with its ligand, GDF15, mediates the GDF15-induced autophosphorylation and activation of the RET tyrosine kinase receptor, leading to activation of MAPK- and AKT- signaling pathways. Ligand-binding activates GFRAL-expressing neurons localized in the area postrema and nucleus tractus solitarius of the brainstem. The GDF15-GFRAL signal induces expression of genes involved in metabolism, such as lipid metabolism in adipose tissues. The protein is GDNF family receptor alpha-like (Gfral) of Mus musculus (Mouse).